We begin with the raw amino-acid sequence, 478 residues long: Ketoisovalerate oxidoreductase subunit VorA (478 aa).

As to quaternary structure, heterotrimer of the VorA, VorB and VorC subunits.

The polypeptide is Ketoisovalerate oxidoreductase subunit VorA (vorA) (Methanothermobacter marburgensis (strain ATCC BAA-927 / DSM 2133 / JCM 14651 / NBRC 100331 / OCM 82 / Marburg) (Methanobacterium thermoautotrophicum)).